A 584-amino-acid chain; its full sequence is MGGCLSGDVKGGKQAIGGVQQRPTSSTIANNAAHNDAVDFFFRSRGQYPLFSQIELTLSASNLLDCDITSKSDPMAVMYLRKKDGRLEEIGRTEVILNNLNPKWIEKITVSFQFEAVQTLVFHVYDVDTRYHNVPVKTLKLKDQDFLGEGTCVLSEIMTRQNRTLTLTLTGNVRAGVNRNLGTLSIQAEETVASKTVAEINFRCVNLDNKDLFSKSDPFLRISRVVETSAAVPICRTEVVDNNLNPMWRPVCLTMQQFGSKDTPLVIECLDFNTSGNHELIGKTEKSVAELERLCLQKEAANFVYPSLSHGRNKVLKGQLIVDRYVEKVQYSFLDYISSGFELNFMVAVDFTASNGDPRTPSSLHYIDPSGRLNSYQQAIMEVGEVIQFYDSDKRFPAWGFGGRTSDGSVSHAFNLNGASYGDEVVGVEGIMVAYASALRNVSLAGPTLFSNVVDKAAHTASQSLSQNSPKYFVLLIITDGVLTDMAGTVDALVRASDLPLSVLIVGVGNTDFKQMEMLDADNGRRLESSTGRIATRDIVQFVPMKDIHSGLVSVVQALLEELPGQFLTYVRSRKINPIGAPAI.

The tract at residues 1-23 (MGGCLSGDVKGGKQAIGGVQQRP) is disordered. A lipid anchor (N-myristoyl glycine) is attached at Gly-2. C2 domains are found at residues 34-167 (HNDA…TLTL) and 178-305 (NRNL…NFVY). Ca(2+) is bound by residues Asp-67, Asp-73, Asp-126, Asp-128, and Asp-145. Positions 344–563 (NFMVAVDFTA…SVVQALLEEL (220 aa)) constitute a VWFA domain.

It belongs to the copine family. Interacts with BAP1 and BAP2. Ca(2+) is required as a cofactor. As to expression, expressed at an extremely low level.

Its subcellular location is the cell membrane. Functionally, negative regulator of cell death and defense responses. Repress a number of R genes and may have effects in promoting growth and development. May function in membrane trafficking and in fusion of vesicles with plasma membrane. The protein is Protein BONZAI 3 (BON3) of Arabidopsis thaliana (Mouse-ear cress).